The sequence spans 428 residues: MENLMASSNLIKQLQERGLVAQVTDEEALAERLAQGPIALYCGFDPTADSLHLGHLVPLLCLKRFQQAGHKPVALVGGATGLIGDPSFKAAERKLNTEDTVQEWVDKIRKQVAPFLDFDCGDNSAIAANNYDWFGSMNVLTFLRDIGKHFSVNQMINKEAVKQRLNRDDQGISFTEFSYNLLQGYDFACLNKLHGVALQIGGSDQWGNITSGIDLTRRLHQNQVFGLTVPLITKADGTKFGKTEGGAVWLDPKKTSPYKFYQFWINTADADVYRFLKFFTFMDIAEINALEEEDKNSGKAPRAQYVLAEQVTRLVHGEEGLEAAKRITESLFNGNLSDLSEADFEQLAQDGVPMIEMEKGADLLQALVDSELQPSRGQARKTVASNAVTINGEKQADPEYVFSDSDRLFGRYTLLRRGKKNYCLVCWK.

Tyrosine 41 contributes to the L-tyrosine binding site. The 'HIGH' region signature appears at 46-55 (PTADSLHLGH). Residues tyrosine 179 and glutamine 183 each contribute to the L-tyrosine site. Residues 239-243 (KFGKT) carry the 'KMSKS' region motif. Lysine 242 contributes to the ATP binding site. One can recognise an S4 RNA-binding domain in the interval 361–418 (ADLLQALVDSELQPSRGQARKTVASNAVTINGEKQADPEYVFSDSDRLFGRYTLLRRG).

This sequence belongs to the class-I aminoacyl-tRNA synthetase family. TyrS type 1 subfamily. As to quaternary structure, homodimer.

Its subcellular location is the cytoplasm. The enzyme catalyses tRNA(Tyr) + L-tyrosine + ATP = L-tyrosyl-tRNA(Tyr) + AMP + diphosphate + H(+). Functionally, catalyzes the attachment of tyrosine to tRNA(Tyr) in a two-step reaction: tyrosine is first activated by ATP to form Tyr-AMP and then transferred to the acceptor end of tRNA(Tyr). The sequence is that of Tyrosine--tRNA ligase from Klebsiella pneumoniae subsp. pneumoniae (strain ATCC 700721 / MGH 78578).